The primary structure comprises 538 residues: MFS-type transporter oryC (538 aa).

6 consecutive transmembrane segments (helical) span residues 14–34 (LTGGWLTFWVTVACATDMSLF), 67–87 (TVTAIYDVGCFFGAIVAFTIG), 96–116 (ILLGTTIMAIGAVLQAASFSL), 120–140 (FVGRIILGIGNGINTATAPIW), 162–182 (IFGFCLVNWINYGLSFVGGSI), and 186–206 (FPLAFQFFFLIILWSTTPWLP). N-linked (GlcNAc...) asparagine glycosylation occurs at asparagine 268. A run of 6 helical transmembrane segments spans residues 288–308 (FGGINIMSYYLPTVLMDSVGL), 315–335 (LLAACNALSYLVFSGLAVLLV), 342–362 (GLMLLSTFGQFLCFLIITILL), 379–399 (VAFFFLYYGAFGIGMLGVPWL), 416–436 (VATATDWITNFVVVEITPIGI), and 443–463 (FWIVWTVTNAAFLPILYFLYP). The N-linked (GlcNAc...) asparagine glycan is linked to asparagine 467.

Belongs to the major facilitator superfamily. Sugar transporter (TC 2.A.1.1) family.

The protein resides in the membrane. Functionally, MFS-type transporter; part of the gene cluster that mediates the biosynthesis of oryzines, natural products with an unusual maleidride backbone. The polypeptide is MFS-type transporter oryC (Aspergillus oryzae (strain ATCC 42149 / RIB 40) (Yellow koji mold)).